Consider the following 565-residue polypeptide: Phosphoenolpyruvate-protein phosphotransferase (565 aa).

The active-site Tele-phosphohistidine intermediate is H191. Phosphoenolpyruvate contacts are provided by R289 and R325. E427 and D451 together coordinate Mg(2+). Phosphoenolpyruvate-binding positions include 450–451 (ND) and R461. Catalysis depends on C498, which acts as the Proton donor.

Belongs to the PEP-utilizing enzyme family. In terms of assembly, homodimer. Requires Mg(2+) as cofactor.

The protein localises to the cytoplasm. The catalysed reaction is L-histidyl-[protein] + phosphoenolpyruvate = N(pros)-phospho-L-histidyl-[protein] + pyruvate. Its function is as follows. General (non sugar-specific) component of the phosphoenolpyruvate-dependent sugar phosphotransferase system (sugar PTS). This major carbohydrate active-transport system catalyzes the phosphorylation of incoming sugar substrates concomitantly with their translocation across the cell membrane. Enzyme I transfers the phosphoryl group from phosphoenolpyruvate (PEP) to the phosphoryl carrier protein (HPr). The sequence is that of Phosphoenolpyruvate-protein phosphotransferase (ptsI) from Haloferax volcanii (strain ATCC 29605 / DSM 3757 / JCM 8879 / NBRC 14742 / NCIMB 2012 / VKM B-1768 / DS2) (Halobacterium volcanii).